We begin with the raw amino-acid sequence, 121 residues long: Large-conductance mechanosensitive channel (121 aa).

The next 2 membrane-spanning stretches (helical) occupy residues 14-34 (VLDLAVGVIIGAAFTALVKSL) and 67-87 (GAFLNDVINFVITAFVIFVLI).

It belongs to the MscL family. In terms of assembly, homopentamer.

It localises to the cell membrane. In terms of biological role, channel that opens in response to stretch forces in the membrane lipid bilayer. May participate in the regulation of osmotic pressure changes within the cell. This Lactococcus lactis subsp. cremoris (strain SK11) protein is Large-conductance mechanosensitive channel.